Consider the following 235-residue polypeptide: Urease accessory protein UreF (235 aa).

Belongs to the UreF family. In terms of assembly, ureD, UreF and UreG form a complex that acts as a GTP-hydrolysis-dependent molecular chaperone, activating the urease apoprotein by helping to assemble the nickel containing metallocenter of UreC. The UreE protein probably delivers the nickel.

Its subcellular location is the cytoplasm. Functionally, required for maturation of urease via the functional incorporation of the urease nickel metallocenter. This is Urease accessory protein UreF from Psychrobacter cryohalolentis (strain ATCC BAA-1226 / DSM 17306 / VKM B-2378 / K5).